Consider the following 602-residue polypeptide: DNA mismatch repair protein MutL (602 aa).

This sequence belongs to the DNA mismatch repair MutL/HexB family.

In terms of biological role, this protein is involved in the repair of mismatches in DNA. It is required for dam-dependent methyl-directed DNA mismatch repair. May act as a 'molecular matchmaker', a protein that promotes the formation of a stable complex between two or more DNA-binding proteins in an ATP-dependent manner without itself being part of a final effector complex. This Baumannia cicadellinicola subsp. Homalodisca coagulata protein is DNA mismatch repair protein MutL.